The following is a 257-amino-acid chain: tRNA (cytidine/uridine/adenosine-2'-O-)-methyltransferase TrmJ (257 aa).

S-adenosyl-L-methionine contacts are provided by residues 79–82 (TSAR), 115–117 (GRE), Ile135, and 142–144 (GSL).

This sequence belongs to the class IV-like SAM-binding methyltransferase superfamily. RNA methyltransferase TrmH family. As to quaternary structure, homodimer.

It is found in the cytoplasm. The catalysed reaction is cytidine(32) in tRNA + S-adenosyl-L-methionine = 2'-O-methylcytidine(32) in tRNA + S-adenosyl-L-homocysteine + H(+). The enzyme catalyses uridine(32) in tRNA + S-adenosyl-L-methionine = 2'-O-methyluridine(32) in tRNA + S-adenosyl-L-homocysteine + H(+). It carries out the reaction adenosine(32) in tRNA + S-adenosyl-L-methionine = 2'-O-methyladenosine(32) in tRNA + S-adenosyl-L-homocysteine + H(+). Its function is as follows. Catalyzes the formation of 2'O-methylated cytidine (Cm32), 2'O-methylated uridine (Um32) or 2'O-methylated adenosine (Am32) at position 32 in tRNA. Confers resistance to oxidative stress. The sequence is that of tRNA (cytidine/uridine/adenosine-2'-O-)-methyltransferase TrmJ from Pseudomonas aeruginosa (strain UCBPP-PA14).